The chain runs to 25 residues: GLVSSIGKALGGLLADVVKTKEQPA.

In terms of tissue distribution, expressed by the skin parotoid and/or rostral glands.

Its subcellular location is the secreted. In terms of biological role, antibacterial peptide, that adopts an alpha helical conformation which can disrupt bacterial membranes. Each caerin displays a different antimicrobial specificity. The protein is Caerin-2.4 of Ranoidea caerulea (Green tree frog).